The primary structure comprises 141 residues: Large ribosomal subunit protein bL17 (141 aa).

The protein belongs to the bacterial ribosomal protein bL17 family. In terms of assembly, part of the 50S ribosomal subunit. Contacts protein L32.

The sequence is that of Large ribosomal subunit protein bL17 from Gluconacetobacter diazotrophicus (strain ATCC 49037 / DSM 5601 / CCUG 37298 / CIP 103539 / LMG 7603 / PAl5).